A 219-amino-acid polypeptide reads, in one-letter code: Capsid protein (219 aa).

A nuclear localization signals region spans residues Arg-5–Arg-29.

This sequence belongs to the circoviridae capsid protein family. Homomultimer. Assembles in the nucleus, presumably in an immature form, then migrates to the cytoplasm once assembled as mature virion. Interacts with Rep; this interaction relocates Rep into the nucleus.

It is found in the host nucleus. The protein localises to the virion. Its function is as follows. Self-assembles to form the virion icosahedral capsid with a T=1 symmetry. This very small capsid (17-22 nm in diameter) allows the virus to be very stable in the environment and resistant to some disinfectants, including detergents. Essential for the initial attachment to heparan sulfate moieties and chondroitin sulfate B of the host cell surface proteoglycans. After attachment, the virus is endocytosed and traffics to the nucleus. The capsid protein binds and transports the viral genome and Rep across the nuclear envelope. This is Capsid protein (Cap) from Homo sapiens (Human).